The sequence spans 315 residues: Epithelial cell adhesion molecule (315 aa).

The signal sequence occupies residues 1–23 (MAGPQALAFGLLLAVVTATLAAA). Residues 24–266 (QRDCVCDNYK…APEFSMQGLT (243 aa)) lie on the Extracellular side of the membrane. 6 cysteine pairs are disulfide-bonded: cysteine 27–cysteine 46, cysteine 29–cysteine 59, cysteine 38–cysteine 48, cysteine 66–cysteine 99, cysteine 110–cysteine 116, and cysteine 118–cysteine 135. The Thyroglobulin type-1 domain occupies 63 to 135 (ASKCLAMKAE…RTDKDTEITC (73 aa)). An N-linked (GlcNAc...) asparagine glycan is attached at asparagine 111. A glycan (N-linked (GlcNAc...) asparagine) is linked at asparagine 198. Residues 267–289 (AGIIAVIVVVSLAVIAGIVVLVI) form a helical membrane-spanning segment. The Cytoplasmic portion of the chain corresponds to 290–315 (STRKKSAKYEKAEIKEMGEIHRELNA).

This sequence belongs to the EPCAM family. Monomer. Interacts with phosphorylated CLDN7. In terms of processing, glycosylation at Asn-198 is crucial for protein stability.

It is found in the lateral cell membrane. The protein resides in the cell junction. The protein localises to the tight junction. May act as a physical homophilic interaction molecule between intestinal epithelial cells (IECs) and intraepithelial lymphocytes (IELs) at the mucosal epithelium for providing immunological barrier as a first line of defense against mucosal infection. Plays a role in embryonic stem cells proliferation and differentiation. Up-regulates the expression of FABP5, MYC and cyclins A and E. The sequence is that of Epithelial cell adhesion molecule (Epcam) from Mus musculus (Mouse).